The sequence spans 397 residues: Leucine carboxyl methyltransferase 1 (397 aa).

The disordered stretch occupies residues 17–61 (AIQTPPPTDPNAAPAHRPAPRPALGRCRPPHRRRRRLRPPVRPPL). The segment covering 26-43 (PNAAPAHRPAPRPALGRC) has biased composition (low complexity). Residues 44 to 55 (RPPHRRRRRLRP) show a composition bias toward basic residues. S-adenosyl-L-methionine is bound by residues Arg-119, Gly-142, Asp-168, 224 to 225 (DL), and Glu-259.

The protein belongs to the methyltransferase superfamily. LCMT family.

The catalysed reaction is [phosphatase 2A protein]-C-terminal L-leucine + S-adenosyl-L-methionine = [phosphatase 2A protein]-C-terminal L-leucine methyl ester + S-adenosyl-L-homocysteine. Functionally, methylates the carboxyl group of the C-terminal leucine residue of protein phosphatase 2A catalytic subunits to form alpha-leucine ester residues. This Cryptococcus neoformans var. neoformans serotype D (strain B-3501A) (Filobasidiella neoformans) protein is Leucine carboxyl methyltransferase 1 (PPM1).